We begin with the raw amino-acid sequence, 241 residues long: Proteasome subunit beta type-1 (241 aa).

M1 carries the N-acetylmethionine modification. A propeptide spanning residues 1–28 (MLSSTAMYSAPGRDLGMEPHRAAGPLQL) is cleaved from the precursor. S58 carries an O-linked (GlcNAc) serine glycan. Residues S62 and S68 each carry the phosphoserine modification. Y150 carries the post-translational modification Phosphotyrosine. S162 carries the post-translational modification Phosphoserine. K204 is subject to N6-acetyllysine. An O-linked (GlcNAc) serine glycan is attached at S209.

It belongs to the peptidase T1B family. The 26S proteasome consists of a 20S proteasome core and two 19S regulatory subunits. The 20S proteasome core is a barrel-shaped complex made of 28 subunits that are arranged in four stacked rings. The two outer rings are each formed by seven alpha subunits, and the two inner rings are formed by seven beta subunits. The proteolytic activity is exerted by three beta-subunits PSMB5, PSMB6 and PSMB7. Interacts with SERPINB2. Interacts with RFPL4A. In terms of assembly, (Microbial infection) Interacts with HIV-1 protein Tat.

The protein localises to the cytoplasm. It is found in the nucleus. Non-catalytic component of the 20S core proteasome complex involved in the proteolytic degradation of most intracellular proteins. This complex plays numerous essential roles within the cell by associating with different regulatory particles. Associated with two 19S regulatory particles, forms the 26S proteasome and thus participates in the ATP-dependent degradation of ubiquitinated proteins. The 26S proteasome plays a key role in the maintenance of protein homeostasis by removing misfolded or damaged proteins that could impair cellular functions, and by removing proteins whose functions are no longer required. Associated with the PA200 or PA28, the 20S proteasome mediates ubiquitin-independent protein degradation. This type of proteolysis is required in several pathways including spermatogenesis (20S-PA200 complex) or generation of a subset of MHC class I-presented antigenic peptides (20S-PA28 complex). This Homo sapiens (Human) protein is Proteasome subunit beta type-1.